The primary structure comprises 258 residues: Ribosomal RNA small subunit methyltransferase A (258 aa).

Residues His9, Leu11, Gly36, Glu57, Asp83, and Asn102 each contribute to the S-adenosyl-L-methionine site.

It belongs to the class I-like SAM-binding methyltransferase superfamily. rRNA adenine N(6)-methyltransferase family. RsmA subfamily.

It localises to the cytoplasm. It catalyses the reaction adenosine(1518)/adenosine(1519) in 16S rRNA + 4 S-adenosyl-L-methionine = N(6)-dimethyladenosine(1518)/N(6)-dimethyladenosine(1519) in 16S rRNA + 4 S-adenosyl-L-homocysteine + 4 H(+). Specifically dimethylates two adjacent adenosines (A1518 and A1519) in the loop of a conserved hairpin near the 3'-end of 16S rRNA in the 30S particle. May play a critical role in biogenesis of 30S subunits. The polypeptide is Ribosomal RNA small subunit methyltransferase A (Caulobacter vibrioides (strain ATCC 19089 / CIP 103742 / CB 15) (Caulobacter crescentus)).